Reading from the N-terminus, the 872-residue chain is Trichohyalin-like protein 1 (872 aa).

Residues 46–81 form the EF-hand domain; it reads CAIHAVERNLNLLNIDSNGAISFDEFVLAIFSFLNV. Over residues 117–127 the composition is skewed to polar residues; that stretch reads QWTEGTSQTQD. Disordered regions lie at residues 117 to 759, 774 to 813, and 830 to 872; these read QWTE…ERGA, LQQT…DSSD, and EFLP…APKQ. Basic and acidic residues-rich tracts occupy residues 142–155, 164–190, 218–235, 296–307, 324–348, 365–375, 399–435, and 486–505; these read SLEE…RVDP, LPVE…KVDQ, TKGE…DILA, GKDEPSSEHVDL, AAKD…ETRD, RVERKGVRGPE, EDKK…KDSE, and SGEK…KEDD. Over residues 538 to 570 the composition is skewed to polar residues; it reads NSETSDLFVQGDSQSQTNPFRGSVQGSDSNNPE. Basic and acidic residues-rich tracts occupy residues 571-584, 592-608, and 664-684; these read TQKH…KRVQ, RGED…EHEG, and TKKD…KEED. 2 stretches are compositionally biased toward polar residues: residues 699–708 and 718–729; these read ENNAVSQKTC and SPQQLAGEQSLS. Residues 730–751 are compositionally biased toward basic and acidic residues; it reads TKEHDPSVSESGLEERMQRDQE. Composition is skewed to polar residues over residues 774–793 and 801–812; these read LQQT…TASV and NQSSASLTNDSS. Basic and acidic residues predominate over residues 849-865; it reads LEDKQGRPQREELEPQK.

The protein belongs to the S-100 family.

In Bos taurus (Bovine), this protein is Trichohyalin-like protein 1 (TCHHL1).